The chain runs to 234 residues: Large ribosomal subunit protein uL1 (234 aa).

This sequence belongs to the universal ribosomal protein uL1 family. Part of the 50S ribosomal subunit.

In terms of biological role, binds directly to 23S rRNA. The L1 stalk is quite mobile in the ribosome, and is involved in E site tRNA release. Protein L1 is also a translational repressor protein, it controls the translation of the L11 operon by binding to its mRNA. The sequence is that of Large ribosomal subunit protein uL1 from Erwinia tasmaniensis (strain DSM 17950 / CFBP 7177 / CIP 109463 / NCPPB 4357 / Et1/99).